Consider the following 163-residue polypeptide: HTH-type transcriptional regulator IscR (163 aa).

The HTH rrf2-type domain maps to 2-131; it reads RLTSKGRYAV…NNITLGELVN (130 aa). The H-T-H motif DNA-binding region spans 28-51; that stretch reads LADISERQGISLSYLEQLFSRLRK. Positions 92, 98, and 104 each coordinate [2Fe-2S] cluster. Basic and acidic residues predominate over residues 140-149; that stretch reads DRQHTHDAPR. The interval 140 to 163 is disordered; the sequence is DRQHTHDAPRSTRTQDAIDVKLRA.

Requires [2Fe-2S] cluster as cofactor.

In terms of biological role, regulates the transcription of several operons and genes involved in the biogenesis of Fe-S clusters and Fe-S-containing proteins. The chain is HTH-type transcriptional regulator IscR from Citrobacter koseri (strain ATCC BAA-895 / CDC 4225-83 / SGSC4696).